Consider the following 1243-residue polypeptide: ATP-dependent helicase/nuclease subunit A (1243 aa).

The UvrD-like helicase ATP-binding domain occupies 2-475; the sequence is VNWTKEQEEA…IDLARNFRSR (474 aa). ATP is bound at residue 23 to 30; it reads AAAGSGKT. In terms of domain architecture, UvrD-like helicase C-terminal spans 502–803; it reads AAELIYGNKM…RIMTIHKSKG (302 aa).

It belongs to the helicase family. AddA subfamily. In terms of assembly, heterodimer of AddA and AddB/RexB. It depends on Mg(2+) as a cofactor.

The enzyme catalyses Couples ATP hydrolysis with the unwinding of duplex DNA by translocating in the 3'-5' direction.. The catalysed reaction is ATP + H2O = ADP + phosphate + H(+). The heterodimer acts as both an ATP-dependent DNA helicase and an ATP-dependent, dual-direction single-stranded exonuclease. Recognizes the chi site generating a DNA molecule suitable for the initiation of homologous recombination. The AddA nuclease domain is required for chi fragment generation; this subunit has the helicase and 3' -&gt; 5' nuclease activities. The chain is ATP-dependent helicase/nuclease subunit A from Oceanobacillus iheyensis (strain DSM 14371 / CIP 107618 / JCM 11309 / KCTC 3954 / HTE831).